Reading from the N-terminus, the 279-residue chain is Probable endonuclease 4 (279 aa).

Zn(2+)-binding residues include histidine 67, histidine 107, glutamate 144, aspartate 177, histidine 180, histidine 214, aspartate 227, histidine 229, and glutamate 259.

It belongs to the AP endonuclease 2 family. The cofactor is Zn(2+).

The catalysed reaction is Endonucleolytic cleavage to 5'-phosphooligonucleotide end-products.. Functionally, endonuclease IV plays a role in DNA repair. It cleaves phosphodiester bonds at apurinic or apyrimidinic (AP) sites, generating a 3'-hydroxyl group and a 5'-terminal sugar phosphate. The polypeptide is Probable endonuclease 4 (Sulfurihydrogenibium sp. (strain YO3AOP1)).